We begin with the raw amino-acid sequence, 793 residues long: MRPRSNAGSSPPDPEEQEHAQVPSFSSTLEQAIHAALALANARRHELATLEHLLLALIDEPDAARVMKACSVDLEDLKKTLTDFIDDDLSTLVTSVEGSEAVPTAAFQRVIQRAAIHVQSSGRTEVTGANVLVAIFAERESNAAYFLQEQDMTRYDAVNFIAHGVAKDPSYGESRPVQGADEPQETPKAEAGEAKESALSKYCVDLNIKARKGDVDPLIGREAEVERAIQVLCRRRKNNPLLVGDPGVGKTAIAEGLAWKIIKKEVPEVLSGATIFSLDMGALLAGTRYRGDFEERLKAVVKELEDHPDAILFIDEIHTVIGAGATSGGAMDASNLLKPALQGGKLRCMGSTTYKEFRQHFEKDRALSRRFQKIDVNEPSVPDAIKILMGLKPHFEEHHELRYTADAIKSAVELASRYINDRKLPDSAIDVIDEAGAAQHLVSDSKRKKVLGTKEIEAVVAKIARIPPRNVSKDDAETLRDLERTLKRLVFGQDKAIEALSASIKLARAGLREPEKPIGNYLFTGPTGVGKTEVAKQLAATLGVELLRFDMSEYMEKHAVSRLIGAPPGYVGFDQGGMLTDGVDQHPHCVLLLDEIEKAHPDVYNILLQVMDHGKLTDHNGRAVDFRNVILIMTSNVGAADMAKEAIGFGRERRTGEDTAAVERTFTPEFRNRLDAVISFAPLGREIILQVVEKFVLQLEAQLIDRNVHIELTPEAAAWLGEKGYDDKMGARPLGRVIQEHIKKPLAEELLFGKLTKGGLVKVGVKDDAIVLEVQEPQKPRLTGQKPPLLTAE.

The disordered stretch occupies residues 1–24 (MRPRSNAGSSPPDPEEQEHAQVPS). The region spanning 22–168 (VPSFSSTLEQ…NFIAHGVAKD (147 aa)) is the Clp R domain. Repeat regions lie at residues 25–88 (FSST…IDDD) and 103–168 (PTAA…VAKD). Residues 169-194 (PSYGESRPVQGADEPQETPKAEAGEA) are disordered. Positions 185 to 194 (ETPKAEAGEA) are enriched in basic and acidic residues. The interval 199-447 (LSKYCVDLNI…AQHLVSDSKR (249 aa)) is i. ATP contacts are provided by residues 244–251 (GDPGVGKT) and 525–532 (GPTGVGKT). Positions 451-639 (LGTKEIEAVV…ILIMTSNVGA (189 aa)) are II.

It belongs to the ClpA/ClpB family.

The sequence is that of ClpA homolog protein from Fuscovulum blasticum (Rhodobacter blasticus).